The following is a 190-amino-acid chain: Xanthine phosphoribosyltransferase (190 aa).

Xanthine-binding residues include leucine 20 and asparagine 27. 128 to 132 provides a ligand contact to 5-phospho-alpha-D-ribose 1-diphosphate; the sequence is ANGKA. Lysine 156 provides a ligand contact to xanthine.

This sequence belongs to the purine/pyrimidine phosphoribosyltransferase family. Xpt subfamily. In terms of assembly, homodimer.

The protein resides in the cytoplasm. It catalyses the reaction XMP + diphosphate = xanthine + 5-phospho-alpha-D-ribose 1-diphosphate. It functions in the pathway purine metabolism; XMP biosynthesis via salvage pathway; XMP from xanthine: step 1/1. Functionally, converts the preformed base xanthine, a product of nucleic acid breakdown, to xanthosine 5'-monophosphate (XMP), so it can be reused for RNA or DNA synthesis. The polypeptide is Xanthine phosphoribosyltransferase (Pseudomonas putida (strain ATCC 700007 / DSM 6899 / JCM 31910 / BCRC 17059 / LMG 24140 / F1)).